The sequence spans 78 residues: Esculentin-2ISa (78 aa).

A signal peptide spans 1 to 22 (MFTLKKSLLLLFFLGTISLSVC). Positions 23 to 39 (KQERDADYEDKGEVEEV) are cleaved as a propeptide — removed in mature form. An intrachain disulfide couples cysteine 72 to cysteine 78.

As to expression, expressed by the skin glands.

It localises to the secreted. In terms of biological role, has antimicrobial activity against Gram-negative bacterium E.coli ATCC 8739 (MIC=12.5 ug), against Gram positive bacteria S.aureus ATCC 6538 (MIC=3.1 ug), methicillin-resistant S.aureus ATCC 43300 (MIC=25 ug), B.subtilis ATCC 6633 (MIC=6.3 ug) and against fungus C.albicans ATCC 90028 (MIC=100 ug). The polypeptide is Esculentin-2ISa (Odorrana ishikawae (Ishikawa's frog)).